Consider the following 393-residue polypeptide: Tryptophan synthase beta chain (393 aa).

Lysine 85 carries the N6-(pyridoxal phosphate)lysine modification.

Belongs to the TrpB family. In terms of assembly, tetramer of two alpha and two beta chains. The cofactor is pyridoxal 5'-phosphate.

It catalyses the reaction (1S,2R)-1-C-(indol-3-yl)glycerol 3-phosphate + L-serine = D-glyceraldehyde 3-phosphate + L-tryptophan + H2O. It functions in the pathway amino-acid biosynthesis; L-tryptophan biosynthesis; L-tryptophan from chorismate: step 5/5. The beta subunit is responsible for the synthesis of L-tryptophan from indole and L-serine. The protein is Tryptophan synthase beta chain (trpB) of Helicobacter pylori (strain J99 / ATCC 700824) (Campylobacter pylori J99).